A 358-amino-acid polypeptide reads, in one-letter code: Magnesium-protoporphyrin IX monomethyl ester [oxidative] cyclase 3 (358 aa).

This sequence belongs to the AcsF family. It depends on Fe cation as a cofactor.

It catalyses the reaction Mg-protoporphyrin IX 13-monomethyl ester + 3 NADPH + 3 O2 + 2 H(+) = 3,8-divinyl protochlorophyllide a + 3 NADP(+) + 5 H2O. It functions in the pathway porphyrin-containing compound metabolism; chlorophyll biosynthesis (light-independent). In terms of biological role, catalyzes the formation of the isocyclic ring in chlorophyll biosynthesis. Mediates the cyclase reaction, which results in the formation of divinylprotochlorophyllide (Pchlide) characteristic of all chlorophylls from magnesium-protoporphyrin IX 13-monomethyl ester (MgPMME). The chain is Magnesium-protoporphyrin IX monomethyl ester [oxidative] cyclase 3 from Nostoc sp. (strain PCC 7120 / SAG 25.82 / UTEX 2576).